The chain runs to 178 residues: Large ribosomal subunit protein bL25 (178 aa).

This sequence belongs to the bacterial ribosomal protein bL25 family. CTC subfamily. As to quaternary structure, part of the 50S ribosomal subunit; part of the 5S rRNA/L5/L18/L25 subcomplex. Contacts the 5S rRNA. Binds to the 5S rRNA independently of L5 and L18.

This is one of the proteins that binds to the 5S RNA in the ribosome where it forms part of the central protuberance. This chain is Large ribosomal subunit protein bL25, found in Campylobacter lari (strain RM2100 / D67 / ATCC BAA-1060).